We begin with the raw amino-acid sequence, 812 residues long: Mitochondrial intermediate peptidase (812 aa).

The N-terminal 29 residues, 1–29 (MRLSRQLLRSTPFLTRAKPVSGKVSHFRS), are a transit peptide targeting the mitochondrion. Positions 19-49 (PVSGKVSHFRSRTDLKGGSSNSSKSPDSVGD) are disordered. A compositionally biased stretch (low complexity) spans 37-46 (SSNSSKSPDS). Position 595 (H595) interacts with Zn(2+). E596 is a catalytic residue. Zn(2+) is bound by residues H599 and H602.

It belongs to the peptidase M3 family. Zn(2+) is required as a cofactor.

Its subcellular location is the mitochondrion matrix. The catalysed reaction is Release of an N-terminal octapeptide as second stage of processing of some proteins imported into the mitochondrion.. In terms of biological role, cleaves proteins, imported into the mitochondrion, to their mature size. While most mitochondrial precursor proteins are processed to the mature form in one step by mitochondrial processing peptidase (MPP), the sequential cleavage by MIP of an octapeptide after initial processing by MPP is a required step for a subgroup of nuclear-encoded precursor proteins destined for the matrix or the inner membrane. This Scheffersomyces stipitis (strain ATCC 58785 / CBS 6054 / NBRC 10063 / NRRL Y-11545) (Yeast) protein is Mitochondrial intermediate peptidase (OCT1).